The primary structure comprises 208 residues: FMN-dependent NADH:quinone oxidoreductase 1 (208 aa).

It belongs to the azoreductase type 1 family. As to quaternary structure, homodimer. FMN serves as cofactor.

It catalyses the reaction 2 a quinone + NADH + H(+) = 2 a 1,4-benzosemiquinone + NAD(+). The catalysed reaction is N,N-dimethyl-1,4-phenylenediamine + anthranilate + 2 NAD(+) = 2-(4-dimethylaminophenyl)diazenylbenzoate + 2 NADH + 2 H(+). In terms of biological role, quinone reductase that provides resistance to thiol-specific stress caused by electrophilic quinones. Functionally, also exhibits azoreductase activity. Catalyzes the reductive cleavage of the azo bond in aromatic azo compounds to the corresponding amines. In Bacillus cereus (strain ATCC 14579 / DSM 31 / CCUG 7414 / JCM 2152 / NBRC 15305 / NCIMB 9373 / NCTC 2599 / NRRL B-3711), this protein is FMN-dependent NADH:quinone oxidoreductase 1.